The chain runs to 135 residues: Small ribosomal subunit protein bS16 (135 aa).

Residues 94–135 (IGTEMETWQQRNDSRLKRGLDRKAIRRKRKKEAEAKEKESAG) form a disordered region. Basic and acidic residues-rich tracts occupy residues 105–116 (NDSRLKRGLDRK) and 124–135 (KEAEAKEKESAG).

The protein belongs to the bacterial ribosomal protein bS16 family.

This Chloroherpeton thalassium (strain ATCC 35110 / GB-78) protein is Small ribosomal subunit protein bS16.